A 256-amino-acid chain; its full sequence is Pimeloyl-[acyl-carrier protein] methyl ester esterase (256 aa).

Positions 15 to 242 (HLVLLHGWGL…AAHAPFISHP (228 aa)) constitute an AB hydrolase-1 domain. Substrate contacts are provided by residues Trp-22, 82–83 (SL), and 143–147 (FLALQ). The active-site Nucleophile is the Ser-82. Catalysis depends on residues Asp-207 and His-235. Substrate is bound at residue His-235.

This sequence belongs to the AB hydrolase superfamily. Carboxylesterase BioH family. As to quaternary structure, monomer.

The protein localises to the cytoplasm. It carries out the reaction 6-carboxyhexanoyl-[ACP] methyl ester + H2O = 6-carboxyhexanoyl-[ACP] + methanol + H(+). The protein operates within cofactor biosynthesis; biotin biosynthesis. Its function is as follows. The physiological role of BioH is to remove the methyl group introduced by BioC when the pimeloyl moiety is complete. It allows to synthesize pimeloyl-ACP via the fatty acid synthetic pathway through the hydrolysis of the ester bonds of pimeloyl-ACP esters. This Salmonella newport (strain SL254) protein is Pimeloyl-[acyl-carrier protein] methyl ester esterase.